The primary structure comprises 23 residues: Basic phospholipase A2 intermexin (23 aa).

This sequence belongs to the phospholipase A2 family. Group II subfamily. It depends on Ca(2+) as a cofactor. Post-translationally, contains 7 disulfide bonds. In terms of tissue distribution, expressed by the venom gland.

It is found in the secreted. It carries out the reaction a 1,2-diacyl-sn-glycero-3-phosphocholine + H2O = a 1-acyl-sn-glycero-3-phosphocholine + a fatty acid + H(+). Its function is as follows. Snake venom phospholipase A2 (PLA2) that shows presynaptic neurotoxicity and low myotoxicity. PLA2 catalyzes the calcium-dependent hydrolysis of the 2-acyl groups in 3-sn-phosphoglycerides. In Gloydius intermedius (Central Asian pit viper), this protein is Basic phospholipase A2 intermexin.